The following is a 937-amino-acid chain: Isoleucine--tRNA ligase (937 aa).

The short motif at 58 to 68 (PYANGNIHIGH) is the 'HIGH' region element. An L-isoleucyl-5'-AMP-binding site is contributed by Glu-560. The 'KMSKS' region signature appears at 601-605 (KMSKS). Lys-604 is a binding site for ATP. Zn(2+) is bound by residues Cys-900, Cys-903, Cys-920, and Cys-923.

Belongs to the class-I aminoacyl-tRNA synthetase family. IleS type 1 subfamily. As to quaternary structure, monomer. Zn(2+) is required as a cofactor.

The protein resides in the cytoplasm. It carries out the reaction tRNA(Ile) + L-isoleucine + ATP = L-isoleucyl-tRNA(Ile) + AMP + diphosphate. Its function is as follows. Catalyzes the attachment of isoleucine to tRNA(Ile). As IleRS can inadvertently accommodate and process structurally similar amino acids such as valine, to avoid such errors it has two additional distinct tRNA(Ile)-dependent editing activities. One activity is designated as 'pretransfer' editing and involves the hydrolysis of activated Val-AMP. The other activity is designated 'posttransfer' editing and involves deacylation of mischarged Val-tRNA(Ile). The protein is Isoleucine--tRNA ligase of Thioalkalivibrio sulfidiphilus (strain HL-EbGR7).